We begin with the raw amino-acid sequence, 416 residues long: MESIIEDVRVRKILDSRGNPTVEVDVITWNGFGRAAAPSGASTGSREVAAFPSGGVDEIITEVEDIISSELIGMDAVDLQDIDLVLKEIDGTENLSSLGGNTVVAVSMATAKAAASSYNMPLYRFLGGNLATSIPYPLGNMINGGAHAGKNAPDIQEFLVVPVGAEDITEAVFANAAVHKRIRELIQKKDPSFAGGKGDEGGWVPSLSNGDALEIQATACEEVTDELGVEVRPSLDLAASEFWDPEIEKYVYRQENVQKDTGEQIEFVKEIIETYDMYYVEDPLHEGDLEGFAELTSLVGDRCMICGDDIFVTNREILREGIEMGAANAIIIKPNQIGTLTDTYLTVKLALENRYTPVVSHRSGETTDDTIAHLAVAFGAPLIKTGAIGGERIAKLNELIRIQEEIPYSRMADLPF.

Residue Q156 coordinates (2R)-2-phosphoglycerate. Residue E200 is the Proton donor of the active site. Residues D236, E281, and D308 each contribute to the Mg(2+) site. (2R)-2-phosphoglycerate-binding residues include K333, R362, S363, and K384. K333 functions as the Proton acceptor in the catalytic mechanism.

The protein belongs to the enolase family. Mg(2+) is required as a cofactor.

The protein resides in the cytoplasm. Its subcellular location is the secreted. It localises to the cell surface. The catalysed reaction is (2R)-2-phosphoglycerate = phosphoenolpyruvate + H2O. Its pathway is carbohydrate degradation; glycolysis; pyruvate from D-glyceraldehyde 3-phosphate: step 4/5. Functionally, catalyzes the reversible conversion of 2-phosphoglycerate (2-PG) into phosphoenolpyruvate (PEP). It is essential for the degradation of carbohydrates via glycolysis. In Methanothermobacter thermautotrophicus (strain ATCC 29096 / DSM 1053 / JCM 10044 / NBRC 100330 / Delta H) (Methanobacterium thermoautotrophicum), this protein is Enolase.